Reading from the N-terminus, the 137-residue chain is Phosphoinositide-interacting protein (137 aa).

The next 2 membrane-spanning stretches (helical) occupy residues 56 to 76 and 94 to 114; these read IVIMSVGGAILLFGVVITCLA and PGFLSLGLMMLVCGLVWVPII.

In terms of assembly, interacts with TRPV1.

It is found in the membrane. Regulatory subunit of TRPV1, a molecular sensor of noxious heat and capsaicin. Positively regulates TRPV1 channel activity via phosphatidylinositol 4,5-bisphosphate (PIP2). Binds various phosphoinositide, including phosphatidylinositol 4,5-bisphosphate (PIP2), but not phosphatidylinositol (PI). In Homo sapiens (Human), this protein is Phosphoinositide-interacting protein (PIRT).